Here is an 813-residue protein sequence, read N- to C-terminus: Envelope glycoprotein H (813 aa).

Positions 1 to 18 are cleaved as a signal peptide; sequence MGLPGSIVFLIMIHAFCA. Residues 19 to 769 are Virion surface-facing; that stretch reads KKTPTNTLPS…ESERVTIISA (751 aa). N-linked (GlcNAc...) asparagine; by host glycans are attached at residues Asn62 and Asn116. The disordered stretch occupies residues 135–159; sequence DRSGLKLDDKDDAQPTGTNPPTELK. Residues 137-147 are compositionally biased toward basic and acidic residues; the sequence is SGLKLDDKDDA. An interaction with gL region spans residues 212–273; that stretch reads DGAEVIMKIG…FTRRPYLIYL (62 aa). 8 N-linked (GlcNAc...) asparagine; by host glycosylation sites follow: Asn247, Asn279, Asn410, Asn434, Asn469, Asn576, Asn727, and Asn750. A helical transmembrane segment spans residues 770-790; the sequence is TYVATATAGASIAISIAIITV. Residues 791–813 are Intravirion-facing; the sequence is RMIINNFRYNYHRYKKLSLYDDL.

The protein belongs to the herpesviridae glycoprotein H family. In terms of assembly, interacts with glycoprotein L (gL); this interaction is necessary for the correct processing and cell surface expression of gH. The heterodimer gH/gL seems to interact with gB trimers during fusion. In terms of processing, N-glycosylated, O-glycosylated, and sialylated.

It localises to the virion membrane. Its subcellular location is the host cell membrane. The protein localises to the host endosome membrane. Functionally, the heterodimer glycoprotein H-glycoprotein L is required for the fusion of viral and plasma membranes leading to virus entry into the host cell. Following initial binding to host receptor, membrane fusion is mediated by the fusion machinery composed of gB and the heterodimer gH/gL. May also be involved in the fusion between the virion envelope and the outer nuclear membrane during virion morphogenesis. This is Envelope glycoprotein H from Gallus gallus (Chicken).